Consider the following 83-residue polypeptide: uncharacterized protein (83 aa).

2 consecutive transmembrane segments (helical) span residues 23-43 (GGCY…SAIA) and 49-69 (SLWW…VVYG).

Its subcellular location is the cell membrane. This is an uncharacterized protein from Mycobacterium tuberculosis (strain CDC 1551 / Oshkosh).